Here is a 181-residue protein sequence, read N- to C-terminus: ATP synthase subunit b 2 (181 aa).

The span at 1 to 18 (MATTTHDAGHGAAEAAHG) shows a compositional bias: low complexity. A disordered region spans residues 1-20 (MATTTHDAGHGAAEAAHGSS). A helical transmembrane segment spans residues 34 to 54 (IFWLLVTLVVIYLILSRIALP).

This sequence belongs to the ATPase B chain family. In terms of assembly, F-type ATPases have 2 components, F(1) - the catalytic core - and F(0) - the membrane proton channel. F(1) has five subunits: alpha(3), beta(3), gamma(1), delta(1), epsilon(1). F(0) has three main subunits: a(1), b(2) and c(10-14). The alpha and beta chains form an alternating ring which encloses part of the gamma chain. F(1) is attached to F(0) by a central stalk formed by the gamma and epsilon chains, while a peripheral stalk is formed by the delta and b chains.

The protein resides in the cell inner membrane. F(1)F(0) ATP synthase produces ATP from ADP in the presence of a proton or sodium gradient. F-type ATPases consist of two structural domains, F(1) containing the extramembraneous catalytic core and F(0) containing the membrane proton channel, linked together by a central stalk and a peripheral stalk. During catalysis, ATP synthesis in the catalytic domain of F(1) is coupled via a rotary mechanism of the central stalk subunits to proton translocation. In terms of biological role, component of the F(0) channel, it forms part of the peripheral stalk, linking F(1) to F(0). The b'-subunit is a diverged and duplicated form of b found in plants and photosynthetic bacteria. The sequence is that of ATP synthase subunit b 2 (atpF2) from Ruegeria sp. (strain TM1040) (Silicibacter sp.).